A 132-amino-acid chain; its full sequence is Small ribosomal subunit protein uS8 (132 aa).

This sequence belongs to the universal ribosomal protein uS8 family. As to quaternary structure, part of the 30S ribosomal subunit. Contacts proteins S5 and S12.

In terms of biological role, one of the primary rRNA binding proteins, it binds directly to 16S rRNA central domain where it helps coordinate assembly of the platform of the 30S subunit. This is Small ribosomal subunit protein uS8 from Streptomyces griseus subsp. griseus (strain JCM 4626 / CBS 651.72 / NBRC 13350 / KCC S-0626 / ISP 5235).